Here is a 463-residue protein sequence, read N- to C-terminus: tRNA-2-methylthio-N(6)-dimethylallyladenosine synthase (463 aa).

Positions 19-135 (RSYWITTFGC…LENLLGKVDL (117 aa)) constitute an MTTase N-terminal domain. C28, C64, C98, C170, C174, and C177 together coordinate [4Fe-4S] cluster. Positions 156 to 393 (RESSICGWVN…NALVEKTARN (238 aa)) constitute a Radical SAM core domain. In terms of domain architecture, TRAM spans 396–463 (QRYINNIESV…RPFSLTGELC (68 aa)).

Belongs to the methylthiotransferase family. MiaB subfamily. In terms of assembly, monomer. [4Fe-4S] cluster is required as a cofactor.

The protein resides in the cytoplasm. The catalysed reaction is N(6)-dimethylallyladenosine(37) in tRNA + (sulfur carrier)-SH + AH2 + 2 S-adenosyl-L-methionine = 2-methylsulfanyl-N(6)-dimethylallyladenosine(37) in tRNA + (sulfur carrier)-H + 5'-deoxyadenosine + L-methionine + A + S-adenosyl-L-homocysteine + 2 H(+). Functionally, catalyzes the methylthiolation of N6-(dimethylallyl)adenosine (i(6)A), leading to the formation of 2-methylthio-N6-(dimethylallyl)adenosine (ms(2)i(6)A) at position 37 in tRNAs that read codons beginning with uridine. This is tRNA-2-methylthio-N(6)-dimethylallyladenosine synthase from Prochlorococcus marinus (strain MIT 9312).